A 202-amino-acid polypeptide reads, in one-letter code: Small ribosomal subunit protein uS4 (202 aa).

A disordered region spans residues 15–42; it reads LGDLPGLTRKAAKRSYPPGQHGQARRKR. The 63-residue stretch at 90-152 folds into the S4 RNA-binding domain; it reads NRLDNVCFRL…KCSKQLAEGN (63 aa).

The protein belongs to the universal ribosomal protein uS4 family. As to quaternary structure, part of the 30S ribosomal subunit. Contacts protein S5. The interaction surface between S4 and S5 is involved in control of translational fidelity.

One of the primary rRNA binding proteins, it binds directly to 16S rRNA where it nucleates assembly of the body of the 30S subunit. In terms of biological role, with S5 and S12 plays an important role in translational accuracy. In Parasynechococcus marenigrum (strain WH8102), this protein is Small ribosomal subunit protein uS4.